A 37-amino-acid chain; its full sequence is Large ribosomal subunit protein bL36c (37 aa).

This sequence belongs to the bacterial ribosomal protein bL36 family.

It localises to the plastid. The polypeptide is Large ribosomal subunit protein bL36c (Helicosporidium sp. subsp. Simulium jonesii (Green alga)).